A 291-amino-acid chain; its full sequence is MLTVRAPATSANLGSGFDVFGVALERPADVVRLEKADRVTIDVTGAGSQYIPEDPDKNTVGAVADALDAPARIQIDKGVRPASGLGSSAASAAAAAVGLNELYDRGYSREELVPIAAKGEAVVSGDAHDDNVAPSIMGGFTIATDKGVTQVDADIPLVACLPDIVVSTRDARNVVPETARVDQMVETVGNAASLTTGMHRDDPELVGQGMHDTVVTPARAKLIDGYEQVREAALAAGATGVTISGAGPTVIAACAEEDRRQIASTMLDAFGERGVDARVYQTRIGGGAEVF.

Residue 80 to 90 (RPASGLGSSAA) coordinates ATP.

Belongs to the GHMP kinase family. Homoserine kinase subfamily.

Its subcellular location is the cytoplasm. The catalysed reaction is L-homoserine + ATP = O-phospho-L-homoserine + ADP + H(+). Its pathway is amino-acid biosynthesis; L-threonine biosynthesis; L-threonine from L-aspartate: step 4/5. Catalyzes the ATP-dependent phosphorylation of L-homoserine to L-homoserine phosphate. The chain is Homoserine kinase from Haloarcula marismortui (strain ATCC 43049 / DSM 3752 / JCM 8966 / VKM B-1809) (Halobacterium marismortui).